Reading from the N-terminus, the 185-residue chain is Peptidyl-tRNA hydrolase (185 aa).

Residue tyrosine 14 coordinates tRNA. The active-site Proton acceptor is the histidine 19. TRNA is bound by residues phenylalanine 64, asparagine 66, and asparagine 112.

It belongs to the PTH family. In terms of assembly, monomer.

It localises to the cytoplasm. The enzyme catalyses an N-acyl-L-alpha-aminoacyl-tRNA + H2O = an N-acyl-L-amino acid + a tRNA + H(+). Hydrolyzes ribosome-free peptidyl-tRNAs (with 1 or more amino acids incorporated), which drop off the ribosome during protein synthesis, or as a result of ribosome stalling. In terms of biological role, catalyzes the release of premature peptidyl moieties from peptidyl-tRNA molecules trapped in stalled 50S ribosomal subunits, and thus maintains levels of free tRNAs and 50S ribosomes. The protein is Peptidyl-tRNA hydrolase of Lactobacillus gasseri (strain ATCC 33323 / DSM 20243 / BCRC 14619 / CIP 102991 / JCM 1131 / KCTC 3163 / NCIMB 11718 / NCTC 13722 / AM63).